A 369-amino-acid polypeptide reads, in one-letter code: S-(hydroxymethyl)glutathione dehydrogenase (369 aa).

The Zn(2+) site is built by cysteine 40, histidine 62, cysteine 92, cysteine 95, cysteine 98, cysteine 106, and cysteine 169.

This sequence belongs to the zinc-containing alcohol dehydrogenase family. Class-III subfamily. In terms of assembly, homodimer. Requires Zn(2+) as cofactor.

Its subcellular location is the cytoplasm. The enzyme catalyses S-(hydroxymethyl)glutathione + NADP(+) = S-formylglutathione + NADPH + H(+). The catalysed reaction is S-(hydroxymethyl)glutathione + NAD(+) = S-formylglutathione + NADH + H(+). It carries out the reaction a primary alcohol + NAD(+) = an aldehyde + NADH + H(+). It catalyses the reaction a secondary alcohol + NAD(+) = a ketone + NADH + H(+). The enzyme catalyses S-nitrosoglutathione + NADH + H(+) = S-(hydroxysulfenamide)glutathione + NAD(+). Its function is as follows. Has high formaldehyde dehydrogenase activity in the presence of glutathione and catalyzes the oxidation of normal alcohols in a reaction that is not GSH-dependent. In addition, hemithiolacetals other than those formed from GSH, including omega-thiol fatty acids, also are substrates. Also acts as a S-nitroso-glutathione reductase by catalyzing the NADH-dependent reduction of S-nitrosoglutathione. This is S-(hydroxymethyl)glutathione dehydrogenase (frmA) from Photobacterium damsela subsp. piscicida (Pasteurella piscicida).